Reading from the N-terminus, the 159-residue chain is Ribosomal RNA large subunit methyltransferase H (159 aa).

S-adenosyl-L-methionine contacts are provided by residues Leu76, Gly108, and 127-132 (FGQLTL).

The protein belongs to the RNA methyltransferase RlmH family. In terms of assembly, homodimer.

The protein localises to the cytoplasm. The enzyme catalyses pseudouridine(1915) in 23S rRNA + S-adenosyl-L-methionine = N(3)-methylpseudouridine(1915) in 23S rRNA + S-adenosyl-L-homocysteine + H(+). Functionally, specifically methylates the pseudouridine at position 1915 (m3Psi1915) in 23S rRNA. The polypeptide is Ribosomal RNA large subunit methyltransferase H (Streptococcus gordonii (strain Challis / ATCC 35105 / BCRC 15272 / CH1 / DL1 / V288)).